The primary structure comprises 612 residues: 1-deoxy-D-xylulose-5-phosphate synthase (612 aa).

Thiamine diphosphate is bound by residues histidine 77 and 118 to 120; that span reads GHS. Aspartate 147 provides a ligand contact to Mg(2+). Thiamine diphosphate is bound by residues 148 to 149, asparagine 176, tyrosine 288, and glutamate 365; that span reads AA. Residue asparagine 176 participates in Mg(2+) binding.

It belongs to the transketolase family. DXPS subfamily. Homodimer. Requires Mg(2+) as cofactor. The cofactor is thiamine diphosphate.

The catalysed reaction is D-glyceraldehyde 3-phosphate + pyruvate + H(+) = 1-deoxy-D-xylulose 5-phosphate + CO2. It participates in metabolic intermediate biosynthesis; 1-deoxy-D-xylulose 5-phosphate biosynthesis; 1-deoxy-D-xylulose 5-phosphate from D-glyceraldehyde 3-phosphate and pyruvate: step 1/1. Functionally, catalyzes the acyloin condensation reaction between C atoms 2 and 3 of pyruvate and glyceraldehyde 3-phosphate to yield 1-deoxy-D-xylulose-5-phosphate (DXP). The protein is 1-deoxy-D-xylulose-5-phosphate synthase of Malacoplasma penetrans (strain HF-2) (Mycoplasma penetrans).